The sequence spans 68 residues: uncharacterized protein (68 aa).

Positions 1–27 (MKGLLCFIYILSAILIGCVFLNKDVEA) are cleaved as a signal peptide.

This is an uncharacterized protein from Invertebrate iridescent virus 6 (IIV-6).